The sequence spans 84 residues: Putative membrane protein insertion efficiency factor (84 aa).

Residues S61–K84 form a disordered region. The span at T72 to K84 shows a compositional bias: polar residues.

The protein belongs to the UPF0161 family.

The protein resides in the cell inner membrane. In terms of biological role, could be involved in insertion of integral membrane proteins into the membrane. The sequence is that of Putative membrane protein insertion efficiency factor from Leptospira borgpetersenii serovar Hardjo-bovis (strain JB197).